The sequence spans 688 residues: Potassium-transporting ATPase ATP-binding subunit (688 aa).

4 helical membrane passes run 37–57, 65–85, 219–239, and 262–282; these read FLVY…LVGI, ILGI…AEAI, IALQ…TVSL, and VALL…SIGI. Residue Asp313 is the 4-aspartylphosphate intermediate of the active site. Residues Asp350, Glu354, 383–390, and Lys401 contribute to the ATP site; that span reads FTAKTRMS. Residues Asp524 and Asp528 each contribute to the Mg(2+) site. The next 3 helical transmembrane spans lie at 594 to 614, 622 to 642, and 668 to 688; these read FAII…LNIM, AIFS…PLAL, and IIVP…IGIV.

The protein belongs to the cation transport ATPase (P-type) (TC 3.A.3) family. Type IA subfamily. As to quaternary structure, the system is composed of three essential subunits: KdpA, KdpB and KdpC.

The protein resides in the cell membrane. It catalyses the reaction K(+)(out) + ATP + H2O = K(+)(in) + ADP + phosphate + H(+). Part of the high-affinity ATP-driven potassium transport (or Kdp) system, which catalyzes the hydrolysis of ATP coupled with the electrogenic transport of potassium into the cytoplasm. This subunit is responsible for energy coupling to the transport system and for the release of the potassium ions to the cytoplasm. This chain is Potassium-transporting ATPase ATP-binding subunit, found in Clostridium botulinum (strain Eklund 17B / Type B).